The following is a 66-amino-acid chain: Toxin Cll1 (66 aa).

The LCN-type CS-alpha/beta domain occupies 1-66 (KEGYLVNKST…TYPLPNKSCS (66 aa)). Intrachain disulfides connect Cys-12–Cys-65, Cys-16–Cys-41, Cys-25–Cys-46, and Cys-29–Cys-48.

This sequence belongs to the long (4 C-C) scorpion toxin superfamily. Sodium channel inhibitor family. Beta subfamily. Expressed by the venom gland.

The protein localises to the secreted. Beta toxin that binds site-4 of sodium channels (Nav) and reduces peak current (observed on Nav1.1/SCN1A, Nav1.2/SCN2A, Nav1.3/SCN3A, Nav1.4/SCN5A, Nav1.5/SCN4A, and Nav1.6/SCN8A (IC(50)=44.9 nM)), shifts the voltage of activation toward more negative potentials (observed on Nav1.6, Nav1.1 (weak), Nav1.2 (weak), and Nav1.7 (weak)), and induces resurgent currents at negative voltages following brief and strong depolarizations (observed on Nav1.6, Nav1.1 (weak), Nav1.2 (weak), and Nav1.4 (weak)). This toxin is only active on crustaceans. The sequence is that of Toxin Cll1 from Centruroides limpidus (Mexican scorpion).